We begin with the raw amino-acid sequence, 374 residues long: uncharacterized protein (374 aa).

The span at 1–13 (METKYHEYDDVQT) shows a compositional bias: basic and acidic residues. Disordered stretches follow at residues 1 to 20 (METK…PSNK), 91 to 193 (SPMT…PLNQ), and 236 to 374 (KINN…SDFE). The span at 95 to 155 (NNNNNNNNNN…NNSSNNNNNN (61 aa)) shows a compositional bias: low complexity. Residues 166 to 193 (ISSNQSSPLSIYSTPPNPSSYVSSPLNQ) show a composition bias toward polar residues. The span at 242–262 (APPPPPKACAPPPPPPPPPPI) shows a compositional bias: pro residues. Positions 277–300 (NNNNNNNNNNNSSNTNDSNNTNNT) are enriched in low complexity.

This is an uncharacterized protein from Dictyostelium discoideum (Social amoeba).